The sequence spans 671 residues: UvrABC system protein B (671 aa).

Residues 25–178 (EGIKKGYKHQ…DAMLKKLVEI (154 aa)) form the Helicase ATP-binding domain. ATP is bound at residue 38-45 (GVTGSGKT). The Beta-hairpin signature appears at 91–114 (YYDYYQPEAYIPETDTYIEKDALI). Positions 435–601 (QVEDLLEEIH…TVKSKIKDIL (167 aa)) constitute a Helicase C-terminal domain. The UVR domain maps to 626–661 (EETIKKLEQEMKHAAENLEFEKAAEIRDKIFKIKEK).

It belongs to the UvrB family. Forms a heterotetramer with UvrA during the search for lesions. Interacts with UvrC in an incision complex.

The protein resides in the cytoplasm. Functionally, the UvrABC repair system catalyzes the recognition and processing of DNA lesions. A damage recognition complex composed of 2 UvrA and 2 UvrB subunits scans DNA for abnormalities. Upon binding of the UvrA(2)B(2) complex to a putative damaged site, the DNA wraps around one UvrB monomer. DNA wrap is dependent on ATP binding by UvrB and probably causes local melting of the DNA helix, facilitating insertion of UvrB beta-hairpin between the DNA strands. Then UvrB probes one DNA strand for the presence of a lesion. If a lesion is found the UvrA subunits dissociate and the UvrB-DNA preincision complex is formed. This complex is subsequently bound by UvrC and the second UvrB is released. If no lesion is found, the DNA wraps around the other UvrB subunit that will check the other stand for damage. This Thermodesulfovibrio yellowstonii (strain ATCC 51303 / DSM 11347 / YP87) protein is UvrABC system protein B.